The following is a 319-amino-acid chain: MAAAVAAPRLISLKAVAKLGFREISQIRQLAPLHSAIPHFGMLRCRSRQPFSTSVVKAQATATEQSPGEVVQKVESPVVVITGASRGIGKAIALALGKAGCKVLVNYARSAKEAEEVAKQIEEYGGQAITFGGDVSKATDVDAMMKTALDKWGTIDVVVNNAGITRDTLLIRMKQSQWDEVIALNLTGVFLCTQAAVKIMMKKKRGRIINISSVVGLIGNIGQANYAAAKGGVISFSKTAAREGASRNINVNVVCPGFIASDMTAELGEDMEKKILGTIPLGRYGKAEEVAGLVEFLALSPAASYITGQAFTIDGGIAI.

The N-terminal 57 residues, 1 to 57, are a transit peptide targeting the chloroplast; that stretch reads MAAAVAAPRLISLKAVAKLGFREISQIRQLAPLHSAIPHFGMLRCRSRQPFSTSVVK. A58 carries the N-acetylalanine modification. 81–105 provides a ligand contact to NADP(+); sequence ITGASRGIGKAIALALGKAGCKVLV. Substrate is bound at residue S213. Residue Y226 is the Proton acceptor of the active site.

Belongs to the short-chain dehydrogenases/reductases (SDR) family. As to quaternary structure, homotetramer.

It is found in the plastid. The protein resides in the chloroplast. It catalyses the reaction a (3R)-hydroxyacyl-[ACP] + NADP(+) = a 3-oxoacyl-[ACP] + NADPH + H(+). The protein operates within lipid metabolism; fatty acid biosynthesis. This is 3-oxoacyl-[acyl-carrier-protein] reductase, chloroplastic from Arabidopsis thaliana (Mouse-ear cress).